A 102-amino-acid chain; its full sequence is Urease subunit beta (102 aa).

The protein belongs to the urease beta subunit family. In terms of assembly, heterotrimer of UreA (gamma), UreB (beta) and UreC (alpha) subunits. Three heterotrimers associate to form the active enzyme.

It is found in the cytoplasm. The catalysed reaction is urea + 2 H2O + H(+) = hydrogencarbonate + 2 NH4(+). Its pathway is nitrogen metabolism; urea degradation; CO(2) and NH(3) from urea (urease route): step 1/1. In Bordetella pertussis (strain Tohama I / ATCC BAA-589 / NCTC 13251), this protein is Urease subunit beta.